The following is a 39-amino-acid chain: Decorsin (39 aa).

Positions 27–38 (CRFPRGDADPYC) are high affinity binding domain. Positions 31 to 33 (RGD) match the Cell attachment site motif.

The protein belongs to the ornatin family.

It localises to the secreted. Its function is as follows. Inhibits fibrinogen interaction with platelet receptors expressed on glycoprotein IIb-IIIa complex. May prevent blood from clotting during either feeding and/or storage of ingested blood. This Macrobdella decora (North American leech) protein is Decorsin.